A 201-amino-acid polypeptide reads, in one-letter code: CASP-like protein 2D1 (201 aa).

At 1-26 (MRSGEGSTAAAAAAEEEKVKVAAPFR) the chain is on the cytoplasmic side. Residues 27-47 (LAELGLRVCAVPLAVASVWEM) form a helical membrane-spanning segment. At 48–70 (ATNKQVDETYGEVRFSDLSGFRY) the chain is on the extracellular side. The chain crosses the membrane as a helical span at residues 71-91 (LVWINAITAAYSVASILLSSC). The Cytoplasmic portion of the chain corresponds to 92–98 (RFITRFD). The helical transmembrane segment at 99–119 (WLIFILDQASAYLLLTSASAA) threads the bilayer. The Extracellular segment spans residues 120–148 (AEVVYLAREGDREVSWGEVCSYFGRFCGA). The chain crosses the membrane as a helical span at residues 149-169 (ATVSVALNAAALLCFMALSLI). The Cytoplasmic segment spans residues 170-201 (SAFRVFTKFNPPSQSNSKQQLSQEQGKPVVSG). The segment covering 180-194 (PPSQSNSKQQLSQEQ) has biased composition (polar residues). Positions 180 to 201 (PPSQSNSKQQLSQEQGKPVVSG) are disordered.

This sequence belongs to the Casparian strip membrane proteins (CASP) family. As to quaternary structure, homodimer and heterodimers.

Its subcellular location is the cell membrane. In Oryza sativa subsp. indica (Rice), this protein is CASP-like protein 2D1.